The sequence spans 117 residues: Nascent polypeptide-associated complex protein (117 aa).

The NAC-A/B domain occupies 9–77 (PKQLKQMQRA…ARERSLEAEM (69 aa)).

The protein belongs to the NAC-alpha family. Homodimer. Interacts with the ribosome. Binds ribosomal RNA.

Its function is as follows. Contacts the emerging nascent chain on the ribosome. In Methanothermobacter thermautotrophicus (strain ATCC 29096 / DSM 1053 / JCM 10044 / NBRC 100330 / Delta H) (Methanobacterium thermoautotrophicum), this protein is Nascent polypeptide-associated complex protein.